The primary structure comprises 134 residues: Ribosome-binding factor A (134 aa).

The protein belongs to the RbfA family. Monomer. Binds 30S ribosomal subunits, but not 50S ribosomal subunits or 70S ribosomes.

Its subcellular location is the cytoplasm. Its function is as follows. One of several proteins that assist in the late maturation steps of the functional core of the 30S ribosomal subunit. Associates with free 30S ribosomal subunits (but not with 30S subunits that are part of 70S ribosomes or polysomes). Required for efficient processing of 16S rRNA. May interact with the 5'-terminal helix region of 16S rRNA. This Bartonella bacilliformis (strain ATCC 35685 / KC583 / Herrer 020/F12,63) protein is Ribosome-binding factor A.